The chain runs to 282 residues: Pantothenate synthetase (282 aa).

30-37 contacts ATP; the sequence is MGYLHEGH. Catalysis depends on H37, which acts as the Proton donor. Residue Q61 coordinates (R)-pantoate. Q61 serves as a coordination point for beta-alanine. 147–150 provides a ligand contact to ATP; it reads GMKD. Q153 lines the (R)-pantoate pocket. ATP contacts are provided by residues V176 and 184–187; that span reads KSSR.

The protein belongs to the pantothenate synthetase family. As to quaternary structure, homodimer.

Its subcellular location is the cytoplasm. It carries out the reaction (R)-pantoate + beta-alanine + ATP = (R)-pantothenate + AMP + diphosphate + H(+). It participates in cofactor biosynthesis; (R)-pantothenate biosynthesis; (R)-pantothenate from (R)-pantoate and beta-alanine: step 1/1. In terms of biological role, catalyzes the condensation of pantoate with beta-alanine in an ATP-dependent reaction via a pantoyl-adenylate intermediate. The chain is Pantothenate synthetase from Bacillus cytotoxicus (strain DSM 22905 / CIP 110041 / 391-98 / NVH 391-98).